Consider the following 70-residue polypeptide: ATP synthase subunit c (70 aa).

2 consecutive transmembrane segments (helical) span residues 4 to 24 and 45 to 65; these read IAAA…NGLI and LMFI…VIAF.

The protein belongs to the ATPase C chain family. In terms of assembly, F-type ATPases have 2 components, F(1) - the catalytic core - and F(0) - the membrane proton channel. F(1) has five subunits: alpha(3), beta(3), gamma(1), delta(1), epsilon(1). F(0) has three main subunits: a(1), b(2) and c(10-14). The alpha and beta chains form an alternating ring which encloses part of the gamma chain. F(1) is attached to F(0) by a central stalk formed by the gamma and epsilon chains, while a peripheral stalk is formed by the delta and b chains.

It localises to the cell membrane. In terms of biological role, f(1)F(0) ATP synthase produces ATP from ADP in the presence of a proton or sodium gradient. F-type ATPases consist of two structural domains, F(1) containing the extramembraneous catalytic core and F(0) containing the membrane proton channel, linked together by a central stalk and a peripheral stalk. During catalysis, ATP synthesis in the catalytic domain of F(1) is coupled via a rotary mechanism of the central stalk subunits to proton translocation. Functionally, key component of the F(0) channel; it plays a direct role in translocation across the membrane. A homomeric c-ring of between 10-14 subunits forms the central stalk rotor element with the F(1) delta and epsilon subunits. The sequence is that of ATP synthase subunit c from Bacillus licheniformis (strain ATCC 14580 / DSM 13 / JCM 2505 / CCUG 7422 / NBRC 12200 / NCIMB 9375 / NCTC 10341 / NRRL NRS-1264 / Gibson 46).